The chain runs to 491 residues: Stage IV sporulation protein A (491 aa).

The short motif at 23 to 30 (GPVRTGKS) is the Walker A motif; involved in ATP-binding element. ATP is bound at residue 23-30 (GPVRTGKS). Residues 334–362 (QLLSLITRLSKVKNEYDKIESALIDAKIK) are a coiled coil.

In terms of assembly, interacts (via Walker A motif) with SipL (via C-terminus LysM domain).

It is found in the cytoplasm. It carries out the reaction ATP + H2O = ADP + phosphate + H(+). Its function is as follows. ATPase. Has a role at an early stage in the morphogenesis of the spore coat and is required for proper coat localization to the forespore. The chain is Stage IV sporulation protein A from Clostridioides difficile (strain 630) (Peptoclostridium difficile).